The primary structure comprises 165 residues: Large ribosomal subunit protein uL30 (165 aa).

This sequence belongs to the universal ribosomal protein uL30 family. Part of the 50S ribosomal subunit.

The polypeptide is Large ribosomal subunit protein uL30 (Thermoplasma acidophilum (strain ATCC 25905 / DSM 1728 / JCM 9062 / NBRC 15155 / AMRC-C165)).